The chain runs to 493 residues: Ketol-acid reductoisomerase (NADP(+)) (493 aa).

A KARI N-terminal Rossmann domain is found at 14-208; it reads LDQLGRCRFM…GGHRAGVLES (195 aa). Residues 45–48, Arg-68, Arg-76, Ser-78, and 108–110 each bind NADP(+); these read CGAQ and DKQ. His-132 is a catalytic residue. Gly-158 contacts NADP(+). KARI C-terminal knotted domains follow at residues 209–345 and 346–486; these read SFVA…APKG and ENIK…MTDM. Asp-217, Glu-221, Glu-390, and Glu-394 together coordinate Mg(2+). Substrate is bound at residue Ser-415.

It belongs to the ketol-acid reductoisomerase family. Mg(2+) serves as cofactor.

The enzyme catalyses (2R)-2,3-dihydroxy-3-methylbutanoate + NADP(+) = (2S)-2-acetolactate + NADPH + H(+). The catalysed reaction is (2R,3R)-2,3-dihydroxy-3-methylpentanoate + NADP(+) = (S)-2-ethyl-2-hydroxy-3-oxobutanoate + NADPH + H(+). It functions in the pathway amino-acid biosynthesis; L-isoleucine biosynthesis; L-isoleucine from 2-oxobutanoate: step 2/4. The protein operates within amino-acid biosynthesis; L-valine biosynthesis; L-valine from pyruvate: step 2/4. Its function is as follows. Involved in the biosynthesis of branched-chain amino acids (BCAA). Catalyzes an alkyl-migration followed by a ketol-acid reduction of (S)-2-acetolactate (S2AL) to yield (R)-2,3-dihydroxy-isovalerate. In the isomerase reaction, S2AL is rearranged via a Mg-dependent methyl migration to produce 3-hydroxy-3-methyl-2-ketobutyrate (HMKB). In the reductase reaction, this 2-ketoacid undergoes a metal-dependent reduction by NADPH to yield (R)-2,3-dihydroxy-isovalerate. This Histophilus somni (strain 2336) (Haemophilus somnus) protein is Ketol-acid reductoisomerase (NADP(+)).